Here is a 172-residue protein sequence, read N- to C-terminus: AIG2-like protein C (172 aa).

13–18 lines the substrate pocket; it reads YGSLQE. Glu81 acts as the Proton acceptor in catalysis.

Belongs to the gamma-glutamylcyclotransferase family. In terms of tissue distribution, expressed in flowers, leaves, stems and roots.

Putative gamma-glutamylcyclotransferase. The protein is AIG2-like protein C of Arabidopsis thaliana (Mouse-ear cress).